Here is a 622-residue protein sequence, read N- to C-terminus: Microtubule-associated protein 70-1 (622 aa).

The interval 1–27 (MSDVSADGGFLSAEQATTPVAIPTPYP) is disordered. Residues 66-365 (DPVKVELNRL…LAISDRAAKS (300 aa)) adopt a coiled-coil conformation. Residues 250–483 (ILDRMHRQKV…YSFNKACDET (234 aa)) form a required for targeting to microtubules region. 2 disordered regions span residues 388–512 (SSIS…TEDN) and 579–622 (AAMR…RSTQ). Composition is skewed to polar residues over residues 400-425 (SMSN…SNGF) and 432-453 (MRNS…TSKS). 2 stretches are compositionally biased toward basic and acidic residues: residues 479 to 501 (ACDE…EKPP) and 579 to 591 (AAMR…DNRA). A coiled-coil region spans residues 541–590 (DKDDAIEMLAKKVETLTKAMEVEAKKMRREVAAMEKEVAAMRVDKDQDNR). The segment covering 594–605 (SSNTKPSSNTAQ) has biased composition (polar residues).

This sequence belongs to the MAP70 family. As to quaternary structure, interacts with MAP70.5 and itself.

The protein resides in the cytoplasm. The protein localises to the cytoskeleton. It localises to the phragmoplast. Its subcellular location is the spindle. Functionally, plant-specific protein that interact with microtubules. In association with MAP70.5, is essential for the normal banding pattern of secondary cell wall and for the proper development of xylem tracheary elements and wood formation. This chain is Microtubule-associated protein 70-1 (MAP70.1), found in Arabidopsis thaliana (Mouse-ear cress).